Consider the following 53-residue polypeptide: ATP synthase protein 8 (53 aa).

A helical transmembrane segment spans residues 9–29; that stretch reads WLILFFIFSITLVIFNILNYF.

Belongs to the ATPase protein 8 family. F-type ATPases have 2 components, CF(1) - the catalytic core - and CF(0) - the membrane proton channel.

The protein resides in the mitochondrion membrane. Mitochondrial membrane ATP synthase (F(1)F(0) ATP synthase or Complex V) produces ATP from ADP in the presence of a proton gradient across the membrane which is generated by electron transport complexes of the respiratory chain. F-type ATPases consist of two structural domains, F(1) - containing the extramembraneous catalytic core and F(0) - containing the membrane proton channel, linked together by a central stalk and a peripheral stalk. During catalysis, ATP synthesis in the catalytic domain of F(1) is coupled via a rotary mechanism of the central stalk subunits to proton translocation. Part of the complex F(0) domain. Minor subunit located with subunit a in the membrane. The protein is ATP synthase protein 8 (mt:ATPase8) of Anopheles quadrimaculatus (Common malaria mosquito).